We begin with the raw amino-acid sequence, 503 residues long: Probable cytosol aminopeptidase (503 aa).

Lys270 and Asp275 together coordinate Mn(2+). Lys282 is an active-site residue. Positions 293, 352, and 354 each coordinate Mn(2+). Arg356 is a catalytic residue.

The protein belongs to the peptidase M17 family. Mn(2+) is required as a cofactor.

It localises to the cytoplasm. The catalysed reaction is Release of an N-terminal amino acid, Xaa-|-Yaa-, in which Xaa is preferably Leu, but may be other amino acids including Pro although not Arg or Lys, and Yaa may be Pro. Amino acid amides and methyl esters are also readily hydrolyzed, but rates on arylamides are exceedingly low.. The enzyme catalyses Release of an N-terminal amino acid, preferentially leucine, but not glutamic or aspartic acids.. Functionally, presumably involved in the processing and regular turnover of intracellular proteins. Catalyzes the removal of unsubstituted N-terminal amino acids from various peptides. This Sodalis glossinidius (strain morsitans) protein is Probable cytosol aminopeptidase.